The chain runs to 293 residues: Pantothenate synthetase (293 aa).

Residue 30–37 (MGYLHKGH) coordinates ATP. Histidine 37 (proton donor) is an active-site residue. Residue glutamine 61 coordinates (R)-pantoate. Glutamine 61 lines the beta-alanine pocket. 147–150 (GEKD) is an ATP binding site. Glutamine 153 contacts (R)-pantoate. Residues valine 176 and 184 to 187 (CSSR) each bind ATP.

It belongs to the pantothenate synthetase family. In terms of assembly, homodimer.

The protein resides in the cytoplasm. The catalysed reaction is (R)-pantoate + beta-alanine + ATP = (R)-pantothenate + AMP + diphosphate + H(+). It functions in the pathway cofactor biosynthesis; (R)-pantothenate biosynthesis; (R)-pantothenate from (R)-pantoate and beta-alanine: step 1/1. In terms of biological role, catalyzes the condensation of pantoate with beta-alanine in an ATP-dependent reaction via a pantoyl-adenylate intermediate. In Brucella canis (strain ATCC 23365 / NCTC 10854 / RM-666), this protein is Pantothenate synthetase.